The following is a 213-amino-acid chain: Orotate phosphoribosyltransferase (213 aa).

Lys26 contributes to the 5-phospho-alpha-D-ribose 1-diphosphate binding site. 34-35 (FF) provides a ligand contact to orotate. Residues 72–73 (YK), Arg98, Lys99, Lys102, His104, and 123–131 (DDVISAGTS) contribute to the 5-phospho-alpha-D-ribose 1-diphosphate site. Positions 127 and 155 each coordinate orotate.

It belongs to the purine/pyrimidine phosphoribosyltransferase family. PyrE subfamily. In terms of assembly, homodimer. Mg(2+) is required as a cofactor.

The enzyme catalyses orotidine 5'-phosphate + diphosphate = orotate + 5-phospho-alpha-D-ribose 1-diphosphate. It participates in pyrimidine metabolism; UMP biosynthesis via de novo pathway; UMP from orotate: step 1/2. Its function is as follows. Catalyzes the transfer of a ribosyl phosphate group from 5-phosphoribose 1-diphosphate to orotate, leading to the formation of orotidine monophosphate (OMP). The sequence is that of Orotate phosphoribosyltransferase from Laribacter hongkongensis (strain HLHK9).